Here is a 61-residue protein sequence, read N- to C-terminus: Metallothionein-1 (61 aa).

The residue at position 1 (M1) is an N-acetylmethionine. The interval 1 to 29 (MDPNCSCSTGSTCTCSSSCGCKDCKCTSC) is beta. A divalent metal cation-binding residues include C5, C7, C13, C15, C19, C21, C24, C26, C29, C33, C34, C36, C37, C41, C44, C48, C50, C57, C59, and C60. The tract at residues 30–61 (KKSCCSCCPVGCSKCAQGCVCKGASDKCTCCA) is alpha.

It belongs to the metallothionein superfamily. Type 1 family.

Metallothioneins have a high content of cysteine residues that bind various heavy metals; these proteins are transcriptionally regulated by both heavy metals and glucocorticoids. The sequence is that of Metallothionein-1 (MT1) from Cricetulus griseus (Chinese hamster).